A 131-amino-acid chain; its full sequence is Large ribosomal subunit protein bL17 (131 aa).

Belongs to the bacterial ribosomal protein bL17 family. As to quaternary structure, part of the 50S ribosomal subunit. Contacts protein L32.

This Shewanella amazonensis (strain ATCC BAA-1098 / SB2B) protein is Large ribosomal subunit protein bL17.